A 392-amino-acid polypeptide reads, in one-letter code: Probable glucan endo-1,6-beta-glucosidase B (392 aa).

Positions 1 to 18 (MKVTRLAVLNTLATLTVA) are cleaved as a signal peptide. N-linked (GlcNAc...) asparagine glycosylation is present at Asn-31. The active-site Proton donor is Glu-220. The active-site Nucleophile is Glu-322.

This sequence belongs to the glycosyl hydrolase 5 (cellulase A) family.

The protein localises to the secreted. The catalysed reaction is Random hydrolysis of (1-&gt;6)-linkages in (1-&gt;6)-beta-D-glucans.. Beta-glucanases participate in the metabolism of beta-glucan, the main structural component of the cell wall. Acts on lutean, pustulan and 1,6-oligo-beta-D-glucosides. The protein is Probable glucan endo-1,6-beta-glucosidase B (exgB) of Aspergillus flavus (strain ATCC 200026 / FGSC A1120 / IAM 13836 / NRRL 3357 / JCM 12722 / SRRC 167).